The primary structure comprises 396 residues: MAKAKFERNKPHCNIGTIGHVDHGKTSLTAAITKILAETGGATFTAYDQIDKAPEEKARGITISTAHVEYETKNRHYAHVDCPGHADYVKNMITGAAQMDGAILVVSAADGPMPQTREHILLARQVGVPALVVFLNKCDMVDDPELLELVELEVRELLSKYEFPGDKIPIIKGSALAALEDSDKKLGHDAILELMRNVDEYIPQPERPIDQPFLMPVEDVFSISGRGTVVTGRVERGIVKVGEEIEIVGLRATQKTTVTGVEMFRKLLDQGQAGDNIGALLRGTKREDVERGQVLAKPGSVKPHTKFKAEAYILTKEEGGRHTPFFTNYRPQFYFRTTDVTGVVHLPEGTEMVMPGDNIAMEVHLIVPIAMEEKLRFAIREGGRTVGAGVVASIIE.

One can recognise a tr-type G domain in the interval 10 to 206 (KPHCNIGTIG…NVDEYIPQPE (197 aa)). Residues 19–26 (GHVDHGKT) form a G1 region. 19 to 26 (GHVDHGKT) contacts GTP. Threonine 26 contacts Mg(2+). Residues 60–64 (GITIS) form a G2 region. The interval 81–84 (DCPG) is G3. GTP is bound by residues 81-85 (DCPGH) and 136-139 (NKCD). The tract at residues 136-139 (NKCD) is G4. Positions 174-176 (SAL) are G5.

It belongs to the TRAFAC class translation factor GTPase superfamily. Classic translation factor GTPase family. EF-Tu/EF-1A subfamily. As to quaternary structure, monomer.

The protein localises to the cytoplasm. The enzyme catalyses GTP + H2O = GDP + phosphate + H(+). GTP hydrolase that promotes the GTP-dependent binding of aminoacyl-tRNA to the A-site of ribosomes during protein biosynthesis. In Bradyrhizobium diazoefficiens (strain JCM 10833 / BCRC 13528 / IAM 13628 / NBRC 14792 / USDA 110), this protein is Elongation factor Tu.